We begin with the raw amino-acid sequence, 288 residues long: METSLRRAAAPAGAVAERTVLRNGGTVRDAVAVEEPLEIRVDGDRLATTMRTPGADGDLALGFLFAEGIISGVEDVGTVIHCGRPGEEGYGNVMDVRSAAGMRIDPERILEGRRFVPVSAACGVCGRLSIDHLMERIRTLPAGEPVAPALVAAGMEILARSQPVFERTGGLHAAVLVGRDGAPIASAEDVGRHNAVDKVVGAALRAGRVGPRAAAGPAPALLAVSGRAGFEIVQKAAAAGVPVIASVSAPSSLAVDLARAAGVTLCGFVRGERMNVYANGERLGLTGP.

Cys122 serves as the catalytic Cysteine persulfide intermediate. 268–273 contacts Mo-bis(molybdopterin guanine dinucleotide); the sequence is FVRGER.

The protein belongs to the FdhD family.

Its subcellular location is the cytoplasm. Functionally, required for formate dehydrogenase (FDH) activity. Acts as a sulfur carrier protein that transfers sulfur from IscS to the molybdenum cofactor prior to its insertion into FDH. The protein is Sulfur carrier protein FdhD of Anaeromyxobacter sp. (strain K).